The chain runs to 944 residues: 2-oxoglutarate dehydrogenase E1 component (944 aa).

The disordered stretch occupies residues 918–944; it reads SSTAEGDPTVHKKEQERIVSDSLTRKN. The segment covering 925 to 936 has biased composition (basic and acidic residues); the sequence is PTVHKKEQERIV.

This sequence belongs to the alpha-ketoglutarate dehydrogenase family. As to quaternary structure, homodimer. Part of the 2-oxoglutarate dehydrogenase (OGDH) complex composed of E1 (2-oxoglutarate dehydrogenase), E2 (dihydrolipoamide succinyltransferase) and E3 (dihydrolipoamide dehydrogenase); the complex contains multiple copies of the three enzymatic components (E1, E2 and E3). The cofactor is thiamine diphosphate.

It carries out the reaction N(6)-[(R)-lipoyl]-L-lysyl-[protein] + 2-oxoglutarate + H(+) = N(6)-[(R)-S(8)-succinyldihydrolipoyl]-L-lysyl-[protein] + CO2. Its function is as follows. E1 component of the 2-oxoglutarate dehydrogenase (OGDH) complex which catalyzes the decarboxylation of 2-oxoglutarate, the first step in the conversion of 2-oxoglutarate to succinyl-CoA and CO(2). The polypeptide is 2-oxoglutarate dehydrogenase E1 component (Bacillus pumilus (strain SAFR-032)).